The following is a 182-amino-acid chain: Ribosome-recycling factor (182 aa).

It belongs to the RRF family.

It is found in the cytoplasm. Responsible for the release of ribosomes from messenger RNA at the termination of protein biosynthesis. May increase the efficiency of translation by recycling ribosomes from one round of translation to another. In Synechocystis sp. (strain ATCC 27184 / PCC 6803 / Kazusa), this protein is Ribosome-recycling factor.